The following is a 246-amino-acid chain: Bis(5'-nucleosyl)-tetraphosphatase PrpE [asymmetrical] (246 aa).

This sequence belongs to the PrpE family. Ni(2+) serves as cofactor.

The enzyme catalyses P(1),P(4)-bis(5'-guanosyl) tetraphosphate + H2O = GMP + GTP + 2 H(+). Asymmetrically hydrolyzes Ap4p to yield AMP and ATP. This chain is Bis(5'-nucleosyl)-tetraphosphatase PrpE [asymmetrical], found in Bacillus cereus (strain B4264).